A 116-amino-acid polypeptide reads, in one-letter code: Iron-sulfur cluster insertion protein ErpA (116 aa).

Iron-sulfur cluster-binding residues include Cys-44, Cys-108, and Cys-110.

It belongs to the HesB/IscA family. In terms of assembly, homodimer. The cofactor is iron-sulfur cluster.

Its function is as follows. Required for insertion of 4Fe-4S clusters for at least IspG. This Ectopseudomonas mendocina (strain ymp) (Pseudomonas mendocina) protein is Iron-sulfur cluster insertion protein ErpA.